Consider the following 118-residue polypeptide: Small ribosomal subunit protein uS13 (118 aa).

The disordered stretch occupies residues 94–118 (GLPVRGQRTKTNARTRKGPRKPIKK).

It belongs to the universal ribosomal protein uS13 family. In terms of assembly, part of the 30S ribosomal subunit. Forms a loose heterodimer with protein S19. Forms two bridges to the 50S subunit in the 70S ribosome.

Located at the top of the head of the 30S subunit, it contacts several helices of the 16S rRNA. In the 70S ribosome it contacts the 23S rRNA (bridge B1a) and protein L5 of the 50S subunit (bridge B1b), connecting the 2 subunits; these bridges are implicated in subunit movement. Contacts the tRNAs in the A and P-sites. This is Small ribosomal subunit protein uS13 from Mannheimia succiniciproducens (strain KCTC 0769BP / MBEL55E).